A 333-amino-acid chain; its full sequence is Ketol-acid reductoisomerase (NAD(P)(+)) (333 aa).

One can recognise a KARI N-terminal Rossmann domain in the interval 2 to 182 (AKIYYDEDAS…GATRAGVIET (181 aa)). Residues 25 to 28 (YGSQ), S51, and 83 to 86 (DTVQ) contribute to the NADP(+) site. H108 is a catalytic residue. G134 is an NADP(+) binding site. The KARI C-terminal knotted domain occupies 183-327 (TFREETETDL…KELRQMMPWL (145 aa)). Mg(2+)-binding residues include D191, E195, E227, and E231. S252 provides a ligand contact to substrate.

Belongs to the ketol-acid reductoisomerase family. It depends on Mg(2+) as a cofactor.

The catalysed reaction is (2R)-2,3-dihydroxy-3-methylbutanoate + NAD(+) = (2S)-2-acetolactate + NADH + H(+). It catalyses the reaction (2R)-2,3-dihydroxy-3-methylbutanoate + NADP(+) = (2S)-2-acetolactate + NADPH + H(+). Its pathway is amino-acid biosynthesis; L-isoleucine biosynthesis; L-isoleucine from 2-oxobutanoate: step 2/4. The protein operates within amino-acid biosynthesis; L-valine biosynthesis; L-valine from pyruvate: step 2/4. Its function is as follows. Involved in the biosynthesis of branched-chain amino acids (BCAA). Catalyzes an alkyl-migration followed by a ketol-acid reduction of (S)-2-acetolactate (S2AL) to yield (R)-2,3-dihydroxy-isovalerate. In the isomerase reaction, S2AL is rearranged via a Mg-dependent methyl migration to produce 3-hydroxy-3-methyl-2-ketobutyrate (HMKB). In the reductase reaction, this 2-ketoacid undergoes a metal-dependent reduction by NADPH or NADH to yield (R)-2,3-dihydroxy-isovalerate. The chain is Ketol-acid reductoisomerase (NAD(P)(+)) from Hydrogenobaculum sp. (strain Y04AAS1).